Reading from the N-terminus, the 407-residue chain is Phosphopentomutase (407 aa).

Mn(2+) is bound by residues aspartate 10, aspartate 306, histidine 311, aspartate 347, histidine 348, and histidine 359.

This sequence belongs to the phosphopentomutase family. Mn(2+) serves as cofactor.

It is found in the cytoplasm. It carries out the reaction 2-deoxy-alpha-D-ribose 1-phosphate = 2-deoxy-D-ribose 5-phosphate. The catalysed reaction is alpha-D-ribose 1-phosphate = D-ribose 5-phosphate. It functions in the pathway carbohydrate degradation; 2-deoxy-D-ribose 1-phosphate degradation; D-glyceraldehyde 3-phosphate and acetaldehyde from 2-deoxy-alpha-D-ribose 1-phosphate: step 1/2. Isomerase that catalyzes the conversion of deoxy-ribose 1-phosphate (dRib-1-P) and ribose 1-phosphate (Rib-1-P) to deoxy-ribose 5-phosphate (dRib-5-P) and ribose 5-phosphate (Rib-5-P), respectively. In Photorhabdus laumondii subsp. laumondii (strain DSM 15139 / CIP 105565 / TT01) (Photorhabdus luminescens subsp. laumondii), this protein is Phosphopentomutase.